A 550-amino-acid chain; its full sequence is Transcription factor 7-like 1-C (550 aa).

A compositionally biased stretch (gly residues) spans 1 to 11; that stretch reads MPQLNSGGGDE. Residues 1–60 form an interaction with CTNNB1-A region; it reads MPQLNSGGGDELGANDELIRFKDEGEQEEKSPGEGSAEDLADVKSSLVNESENHSSDSDS. Disordered regions lie at residues 1–76, 182–206, and 390–473; these read MPQL…EKPR, GTPP…HPSE, and WSAR…SLTT. Composition is skewed to basic and acidic residues over residues 17 to 32 and 51 to 76; these read ELIR…EKSP and SENH…EKPR. The segment at 108–311 is interaction with AES and TLE4-A; it reads LGGITCPMVP…SPNLSRKSNV (204 aa). The HMG box DNA-binding region spans 323-391; the sequence is IKKPLNAFML…LHSQLYPSWS (69 aa). Residues 406–415 show a composition bias toward basic and acidic residues; that stretch reads KQSPEMENYT. An interaction with CTBP-B region spans residues 407 to 550; it reads QSPEMENYTK…PLSLVTRSSD (144 aa). Residues 444-463 show a composition bias toward low complexity; sequence SPATPSAALASPAAPAATHS. Residues 464 to 473 are compositionally biased toward polar residues; it reads EQAQPLSLTT.

It belongs to the TCF/LEF family. Interacts with csnk1e, ctnnb1-A, ctbp-B, dact1-A and gsk3b. May interact with ase and tle4-A. In terms of processing, phosphorylated. Phosphorylation by csnk1e promotes binding to ctnnb1-A while phosphorylation by gsk3b may reverse this effect.

The protein resides in the nucleus. In terms of biological role, participates in the Wnt signaling pathway. Binds to DNA and acts as a repressor in the absence of ctnnb1-A and possibly ctnnb1-B, and as an activator in the presence of these proteins. Required early in development for the establishment of the dorsal body axis in response to maternal Wnt signaling. This chain is Transcription factor 7-like 1-C (tcf7l1-c), found in Xenopus laevis (African clawed frog).